The primary structure comprises 490 residues: Probable cytosol aminopeptidase (490 aa).

2 residues coordinate Mn(2+): Lys-256 and Asp-261. Lys-268 is a catalytic residue. Residues Asp-280, Asp-340, and Glu-342 each contribute to the Mn(2+) site. Residue Arg-344 is part of the active site.

This sequence belongs to the peptidase M17 family. It depends on Mn(2+) as a cofactor.

The protein localises to the cytoplasm. It catalyses the reaction Release of an N-terminal amino acid, Xaa-|-Yaa-, in which Xaa is preferably Leu, but may be other amino acids including Pro although not Arg or Lys, and Yaa may be Pro. Amino acid amides and methyl esters are also readily hydrolyzed, but rates on arylamides are exceedingly low.. The enzyme catalyses Release of an N-terminal amino acid, preferentially leucine, but not glutamic or aspartic acids.. Its function is as follows. Presumably involved in the processing and regular turnover of intracellular proteins. Catalyzes the removal of unsubstituted N-terminal amino acids from various peptides. In Prochlorococcus marinus (strain MIT 9313), this protein is Probable cytosol aminopeptidase.